Reading from the N-terminus, the 282-residue chain is Probable aquaporin PIP2-6 (282 aa).

The next 2 membrane-spanning stretches (helical) occupy residues 39 to 59 (ALIA…ATVI) and 76 to 96 (LGIA…TAGI). The NPA 1 signature appears at 102 to 104 (NPA). Transmembrane regions (helical) follow at residues 121 to 141 (VMYI…VKGI), 163 to 183 (GTAL…VFSA), and 197 to 217 (VLAP…TIPI). The NPA 2 signature appears at 223–225 (NPA). A helical transmembrane segment spans residues 245–265 (IFWAGPFIGALAAAAYHQYIL).

The protein belongs to the MIP/aquaporin (TC 1.A.8) family. PIP (TC 1.A.8.11) subfamily. As to expression, expressed in roots and leaves.

The protein resides in the cell membrane. Its function is as follows. Aquaporins facilitate the transport of water and small neutral solutes across cell membranes. In Oryza sativa subsp. japonica (Rice), this protein is Probable aquaporin PIP2-6 (PIP2-6).